The primary structure comprises 358 residues: Methylthioribose-1-phosphate isomerase (358 aa).

Residues 54–56, arginine 96, and glutamine 205 each bind substrate; that span reads RGA. Aspartate 246 serves as the catalytic Proton donor. 256-257 is a substrate binding site; sequence NK.

This sequence belongs to the eIF-2B alpha/beta/delta subunits family. MtnA subfamily.

It carries out the reaction 5-(methylsulfanyl)-alpha-D-ribose 1-phosphate = 5-(methylsulfanyl)-D-ribulose 1-phosphate. It functions in the pathway amino-acid biosynthesis; L-methionine biosynthesis via salvage pathway; L-methionine from S-methyl-5-thio-alpha-D-ribose 1-phosphate: step 1/6. In terms of biological role, catalyzes the interconversion of methylthioribose-1-phosphate (MTR-1-P) into methylthioribulose-1-phosphate (MTRu-1-P). The chain is Methylthioribose-1-phosphate isomerase from Ectopseudomonas mendocina (strain ymp) (Pseudomonas mendocina).